The primary structure comprises 79 residues: Putative antitoxin MM_2475 (79 aa).

This sequence belongs to the UPF0330 family.

Possibly the antitoxin component of a type II toxin-antitoxin (TA) system. This Methanosarcina mazei (strain ATCC BAA-159 / DSM 3647 / Goe1 / Go1 / JCM 11833 / OCM 88) (Methanosarcina frisia) protein is Putative antitoxin MM_2475.